Consider the following 155-residue polypeptide: SsrA-binding protein (155 aa).

The interval 136 to 155 is disordered; sequence RESLKRRQDQRDMQRAMKNY.

This sequence belongs to the SmpB family.

It is found in the cytoplasm. In terms of biological role, required for rescue of stalled ribosomes mediated by trans-translation. Binds to transfer-messenger RNA (tmRNA), required for stable association of tmRNA with ribosomes. tmRNA and SmpB together mimic tRNA shape, replacing the anticodon stem-loop with SmpB. tmRNA is encoded by the ssrA gene; the 2 termini fold to resemble tRNA(Ala) and it encodes a 'tag peptide', a short internal open reading frame. During trans-translation Ala-aminoacylated tmRNA acts like a tRNA, entering the A-site of stalled ribosomes, displacing the stalled mRNA. The ribosome then switches to translate the ORF on the tmRNA; the nascent peptide is terminated with the 'tag peptide' encoded by the tmRNA and targeted for degradation. The ribosome is freed to recommence translation, which seems to be the essential function of trans-translation. This is SsrA-binding protein from Nostoc sp. (strain PCC 7120 / SAG 25.82 / UTEX 2576).